We begin with the raw amino-acid sequence, 207 residues long: Ribosomal RNA small subunit methyltransferase G (207 aa).

Residues glycine 77, phenylalanine 82, 100-102, and arginine 141 each bind S-adenosyl-L-methionine; that span reads ERS.

Belongs to the methyltransferase superfamily. RNA methyltransferase RsmG family.

It is found in the cytoplasm. Its function is as follows. Specifically methylates the N7 position of a guanine in 16S rRNA. This chain is Ribosomal RNA small subunit methyltransferase G, found in Borrelia turicatae (strain 91E135).